A 473-amino-acid chain; its full sequence is Ion-translocating oxidoreductase complex subunit C (473 aa).

4Fe-4S ferredoxin-type domains follow at residues 328 to 357 (KNES…QQLY) and 368 to 396 (TKKH…VKYF). [4Fe-4S] cluster-binding residues include C337, C340, C343, C347, C376, C379, C382, and C386.

It belongs to the 4Fe4S bacterial-type ferredoxin family. RnfC subfamily. In terms of assembly, the complex is composed of six subunits: RnfA, RnfB, RnfC, RnfD, RnfE and RnfG. It depends on [4Fe-4S] cluster as a cofactor.

It is found in the cell inner membrane. Functionally, part of a membrane-bound complex that couples electron transfer with translocation of ions across the membrane. This is Ion-translocating oxidoreductase complex subunit C from Buchnera aphidicola subsp. Acyrthosiphon pisum (strain APS) (Acyrthosiphon pisum symbiotic bacterium).